Reading from the N-terminus, the 155-residue chain is Small ribosomal subunit protein uS7cz/uS7cy (155 aa).

The protein belongs to the universal ribosomal protein uS7 family. Part of the 30S ribosomal subunit.

The protein localises to the plastid. It localises to the chloroplast. In terms of biological role, one of the primary rRNA binding proteins, it binds directly to 16S rRNA where it nucleates assembly of the head domain of the 30S subunit. The polypeptide is Small ribosomal subunit protein uS7cz/uS7cy (rps7-A) (Psilotum nudum (Whisk fern)).